The sequence spans 180 residues: Cytidylate kinase (180 aa).

7 to 15 (GPPGSGKST) serves as a coordination point for ATP.

The protein belongs to the cytidylate kinase family. Type 2 subfamily.

It localises to the cytoplasm. The enzyme catalyses CMP + ATP = CDP + ADP. It carries out the reaction dCMP + ATP = dCDP + ADP. The sequence is that of Cytidylate kinase from Sulfurisphaera tokodaii (strain DSM 16993 / JCM 10545 / NBRC 100140 / 7) (Sulfolobus tokodaii).